The sequence spans 216 residues: Inactive ribonuclease-like protein 10 (216 aa).

The first 26 residues, 1-26 (MKLNLVQIFFMLLMLLLGLGMGLGLG), serve as a signal peptide directing secretion. Residues 43–65 (EFWSSDSQDKAEATEEGDGTQTT) are disordered.

Belongs to the pancreatic ribonuclease family. In terms of processing, the N-terminus is blocked. Glycosylated.

It localises to the secreted. Its function is as follows. Secreted proximal epididymal protein required for post-testicular sperm maturation and male fertility. May be involved in sperm adhesion to the egg zona pellucida. Does not have ribonuclease activity. The sequence is that of Inactive ribonuclease-like protein 10 (RNASE10) from Homo sapiens (Human).